Reading from the N-terminus, the 189-residue chain is RPW8-like protein 1 (189 aa).

The RPW8 domain maps to 1–153 (MPLVELLTSA…ITRQPMDIIE (153 aa)). A helical transmembrane segment spans residues 7-24 (LTSAALGLSLQLLHDAII). Coiled coils occupy residues 65-92 (FRKV…LKLR) and 126-147 (DIKK…ITRQ). N-linked (GlcNAc...) asparagine glycosylation occurs at N177.

Belongs to the plant RPW8 protein family.

Its subcellular location is the membrane. Probable disease resistance (R) protein. This is RPW8-like protein 1 from Arabidopsis thaliana (Mouse-ear cress).